The following is a 117-amino-acid chain: Large ribosomal subunit protein bL20c (117 aa).

Belongs to the bacterial ribosomal protein bL20 family.

The protein localises to the plastid. Its subcellular location is the chloroplast. Binds directly to 23S ribosomal RNA and is necessary for the in vitro assembly process of the 50S ribosomal subunit. It is not involved in the protein synthesizing functions of that subunit. The polypeptide is Large ribosomal subunit protein bL20c (rpl20) (Arabidopsis thaliana (Mouse-ear cress)).